Reading from the N-terminus, the 688-residue chain is Lectin-domain containing receptor kinase VI.3 (688 aa).

Residues 1-14 form the signal peptide; sequence MLVLFLLLTIPTRA. At 15–306 the chain is on the extracellular side; sequence QRTTTETPKT…KRGYNSQVLA (292 aa). The legume-lectin like stretch occupies residues 22-271; that stretch reads PKTEFIFRGF…AHYVMGWSFS (250 aa). Residues 307 to 327 form a helical membrane-spanning segment; that stretch reads LIVALSGVTVILLALLFFFVM. Topologically, residues 328-688 are cytoplasmic; that stretch reads YKKRLQQGEV…VSSSSVISGR (361 aa). Residues 361 to 640 enclose the Protein kinase domain; that stretch reads FKENRIVGTG…LNGDDDVPEI (280 aa). Residues 367–375 and Lys-391 contribute to the ATP site; that span reads VGTGGFGTV. Asp-490 (proton acceptor) is an active-site residue. The disordered stretch occupies residues 662–688; that stretch reads VSSDRASSSVPSFSVTRVSSSSVISGR.

In the C-terminal section; belongs to the protein kinase superfamily. Ser/Thr protein kinase family. It in the N-terminal section; belongs to the leguminous lectin family.

It localises to the cell membrane. The enzyme catalyses L-seryl-[protein] + ATP = O-phospho-L-seryl-[protein] + ADP + H(+). The catalysed reaction is L-threonyl-[protein] + ATP = O-phospho-L-threonyl-[protein] + ADP + H(+). Involved in negative regulation of abscisic acid response in seed germination. The protein is Lectin-domain containing receptor kinase VI.3 (LECRK63) of Arabidopsis thaliana (Mouse-ear cress).